Reading from the N-terminus, the 256-residue chain is Large ribosomal subunit protein bL21c (256 aa).

The transit peptide at 1–55 directs the protein to the chloroplast; sequence MASATLAFSCSSLCATLKLPQNLNPLLLNVPPLSKPFSGVVSPPSLSRLSLLPVA.

Component of the chloroplast large ribosomal subunit (LSU). Mature 70S chloroplast ribosomes of higher plants consist of a small (30S) and a large (50S) subunit. The 30S small subunit contains 1 molecule of ribosomal RNA (16S rRNA) and 24 different proteins. The 50S large subunit contains 3 rRNA molecules (23S, 5S and 4.5S rRNA) and 33 different proteins.

The protein localises to the plastid. Its subcellular location is the chloroplast. Component of the chloroplast ribosome (chloro-ribosome), a dedicated translation machinery responsible for the synthesis of chloroplast genome-encoded proteins, including proteins of the transcription and translation machinery and components of the photosynthetic apparatus. In Spinacia oleracea (Spinach), this protein is Large ribosomal subunit protein bL21c (RPL21).